The chain runs to 211 residues: Thymidylate kinase (211 aa).

An ATP-binding site is contributed by 7–14 (GIDASGKS).

This sequence belongs to the thymidylate kinase family.

It carries out the reaction dTMP + ATP = dTDP + ADP. Its function is as follows. Phosphorylation of dTMP to form dTDP in both de novo and salvage pathways of dTTP synthesis. In Mesomycoplasma hyopneumoniae (strain 7448) (Mycoplasma hyopneumoniae), this protein is Thymidylate kinase.